We begin with the raw amino-acid sequence, 385 residues long: Glucans biosynthesis protein C (385 aa).

10 helical membrane passes run 17-37 (AWLM…SHTW), 60-80 (MQVF…RYPL), 91-111 (VGIP…IMLQ), 137-157 (ISHL…VWIF), 173-193 (KFSM…YAVI), 212-232 (FIVM…LAFI), 239-259 (LFTT…VAYL), 274-294 (TESV…FSFG), 311-331 (ASLF…AYIT), and 338-358 (WLGF…LYEI).

The protein belongs to the acyltransferase 3 family. OpgC subfamily.

It localises to the cell membrane. The protein operates within glycan metabolism; osmoregulated periplasmic glucan (OPG) biosynthesis. Its function is as follows. Necessary for the succinyl substitution of periplasmic glucans. Could catalyze the transfer of succinyl residues from the cytoplasmic side of the membrane to the nascent glucan backbones on the periplasmic side of the membrane. The polypeptide is Glucans biosynthesis protein C (Escherichia coli (strain SMS-3-5 / SECEC)).